The sequence spans 82 residues: Turripeptide IX-04 (82 aa).

An N-terminal signal peptide occupies residues 1 to 21 (MGFYMLLTVALLLTSLMNVEA). Residues 22–39 (TPVDQAERSALEKSGLGN) constitute a propeptide that is removed on maturation. 3 cysteine pairs are disulfide-bonded: Cys48/Cys70, Cys55/Cys74, and Cys60/Cys81.

In terms of tissue distribution, expressed by the venom duct.

The protein localises to the secreted. This is Turripeptide IX-04 from Gemmula speciosa (Splendid gem-turris).